The primary structure comprises 432 residues: Ciliated left-right organizer protein containing ZP-N domains homolog (432 aa).

In terms of tissue distribution, expressed specifically by cells of the ciliated left-right organizer.

This Danio rerio (Zebrafish) protein is Ciliated left-right organizer protein containing ZP-N domains homolog (ciroz).